Consider the following 215-residue polypeptide: Calmodulin-like protein 5 (215 aa).

Positions 38–61 are disordered; that stretch reads KNSPPSPSTMLPSPSSSSAPTKRI. Residues 45-57 show a composition bias toward low complexity; it reads STMLPSPSSSSAP. EF-hand domains lie at 61–96, 97–132, 139–174, and 177–212; these read IDPS…LGIY, IPDK…IVDE, TEEE…LGLK, and KTLD…GGFS. Residues Asp74, Asn76, Asp78, Arg80, Glu85, Asp110, Asn112, Asp114, Cys116, Glu121, Asp152, Asp154, Asp156, Glu163, Asp190, Asp192, Asp194, Arg196, and Glu201 each contribute to the Ca(2+) site.

The protein belongs to the calmodulin family.

Potential calcium sensor. The protein is Calmodulin-like protein 5 (CML5) of Arabidopsis thaliana (Mouse-ear cress).